We begin with the raw amino-acid sequence, 242 residues long: Large ribosomal subunit protein uL3 (242 aa).

At Gln151 the chain carries N5-methylglutamine.

This sequence belongs to the universal ribosomal protein uL3 family. Part of the 50S ribosomal subunit. Forms a cluster with proteins L14 and L19. Post-translationally, methylated by PrmB.

In terms of biological role, one of the primary rRNA binding proteins, it binds directly near the 3'-end of the 23S rRNA, where it nucleates assembly of the 50S subunit. This chain is Large ribosomal subunit protein uL3, found in Zymomonas mobilis subsp. mobilis (strain ATCC 31821 / ZM4 / CP4).